A 215-amino-acid polypeptide reads, in one-letter code: 3-demethoxyubiquinol 3-hydroxylase (215 aa).

Residues 26–47 form a disordered region; the sequence is PSSAHSQRPSPAVVQPEHKMSE. Fe cation contacts are provided by glutamate 64, glutamate 94, histidine 97, glutamate 146, glutamate 178, and histidine 181.

It belongs to the COQ7 family. Fe cation serves as cofactor.

It localises to the cell membrane. It catalyses the reaction a 5-methoxy-2-methyl-3-(all-trans-polyprenyl)benzene-1,4-diol + AH2 + O2 = a 3-demethylubiquinol + A + H2O. It functions in the pathway cofactor biosynthesis; ubiquinone biosynthesis. Functionally, catalyzes the hydroxylation of 2-nonaprenyl-3-methyl-6-methoxy-1,4-benzoquinol during ubiquinone biosynthesis. This Pseudomonas syringae pv. syringae (strain B728a) protein is 3-demethoxyubiquinol 3-hydroxylase.